The chain runs to 392 residues: Speckle-type POZ protein-like A (392 aa).

The region spanning 31-161 is the MATH domain; that stretch reads KFSYMWTINN…DDKLTLFCEV (131 aa). Residues 200 to 267 enclose the BTB domain; it reads TDCSLYVGGQ…IYTGKAPNLE (68 aa).

The protein belongs to the Tdpoz family. Homodimer. Heterodimer with SPOP. Component of cullin-RING-based BCR (BTB-CUL3-RBX1) E3 ubiquitin-protein ligase complexes containing homodimeric SPOPL or the heterodimer formed by SPOP and SPOPL.

It localises to the nucleus. It functions in the pathway protein modification; protein ubiquitination. Its function is as follows. Component of a cullin-RING-based BCR (BTB-CUL3-RBX1) E3 ubiquitin-protein ligase complex that mediates the ubiquitination and subsequent proteasomal degradation of target proteins, but with relatively low efficiency. The polypeptide is Speckle-type POZ protein-like A (spopla) (Danio rerio (Zebrafish)).